The following is a 260-amino-acid chain: Late transcription factor 1 (260 aa).

Belongs to the chordopoxvirinae VLTF-1 family. Interacts with the late transcription factors VLTF-2 and VLTF-3. Interacts with the late transcription elongation factor VLTF-4. Interacts with itself.

Functionally, associates with RNA polymerase to initiate transcription from late gene promoters. This chain is Late transcription factor 1 (OPG093), found in Vaccinia virus (strain Ankara) (VACV).